The primary structure comprises 203 residues: Lipoprotein MlpJ (203 aa).

The N-terminal stretch at 1–17 is a signal peptide; the sequence is MKIINILFCISLLLLNS. Residue cysteine 18 is the site of N-palmitoyl cysteine attachment. Cysteine 18 carries S-diacylglycerol cysteine lipidation. Positions 26 to 47 are disordered; it reads LKNNAQQTKSRKKRDLSQEELP.

It belongs to the Multicopy lipoprotein (Mlp) family.

It localises to the cell outer membrane. Functionally, an outer membrane protein that may participate in pathogenesis. Some human Lyme disease patients have antibodies against this protein. The Mlp proteins probably undergo intragenic recombination, generating new alleles. This chain is Lipoprotein MlpJ, found in Borreliella burgdorferi (strain ATCC 35210 / DSM 4680 / CIP 102532 / B31) (Borrelia burgdorferi).